A 361-amino-acid chain; its full sequence is Probable dual-specificity RNA methyltransferase RlmN (361 aa).

Glu91 acts as the Proton acceptor in catalysis. A Radical SAM core domain is found at 97–329; sequence QHYGLSVCVT…KKKGGNCVVR (233 aa). A disulfide bond links Cys104 and Cys340. [4Fe-4S] cluster-binding residues include Cys111, Cys115, and Cys118. S-adenosyl-L-methionine-binding positions include 163 to 164, Ser195, 218 to 220, and Asn296; these read GE and SLH. The active-site S-methylcysteine intermediate is the Cys340.

The protein belongs to the radical SAM superfamily. RlmN family. [4Fe-4S] cluster is required as a cofactor.

The protein resides in the cytoplasm. It catalyses the reaction adenosine(2503) in 23S rRNA + 2 reduced [2Fe-2S]-[ferredoxin] + 2 S-adenosyl-L-methionine = 2-methyladenosine(2503) in 23S rRNA + 5'-deoxyadenosine + L-methionine + 2 oxidized [2Fe-2S]-[ferredoxin] + S-adenosyl-L-homocysteine. The catalysed reaction is adenosine(37) in tRNA + 2 reduced [2Fe-2S]-[ferredoxin] + 2 S-adenosyl-L-methionine = 2-methyladenosine(37) in tRNA + 5'-deoxyadenosine + L-methionine + 2 oxidized [2Fe-2S]-[ferredoxin] + S-adenosyl-L-homocysteine. In terms of biological role, specifically methylates position 2 of adenine 2503 in 23S rRNA and position 2 of adenine 37 in tRNAs. The protein is Probable dual-specificity RNA methyltransferase RlmN of Streptococcus pneumoniae serotype 2 (strain D39 / NCTC 7466).